The chain runs to 377 residues: uncharacterized protein (377 aa).

The tract at residues 1–25 (MAQQTNVAGQKTEKQRKAPFRADHV) is disordered. Residues 11–24 (KTEKQRKAPFRADH) are compositionally biased toward basic and acidic residues.

It to B.subtilis YxjG.

This is an uncharacterized protein from Bacillus subtilis (strain 168).